The chain runs to 1115 residues: Ubiquitin C-terminal hydrolase 13 (1115 aa).

Residues 1-51 (MTMMTPPPLDQQEDEEMLVPNPDLVEGPQPMEVAQTDPAATAVENPPPEDP) form a disordered region. The MATH domain maps to 53–178 (SLKFTWTIPM…NDTVLIEAEV (126 aa)). The 325-residue stretch at 198–522 (VGLKNQGATC…NAYMLVYIRE (325 aa)) folds into the USP domain. Cysteine 207 serves as the catalytic Nucleophile. Histidine 454 serves as the catalytic Proton acceptor.

It belongs to the peptidase C19 family. Interacts with SIC/RON3. Interacts with RGI1 and RGI2.

It carries out the reaction Thiol-dependent hydrolysis of ester, thioester, amide, peptide and isopeptide bonds formed by the C-terminal Gly of ubiquitin (a 76-residue protein attached to proteins as an intracellular targeting signal).. Its function is as follows. Recognizes and hydrolyzes the peptide bond at the C-terminal Gly of ubiquitin. Involved in the processing of poly-ubiquitin precursors as well as that of ubiquitinated proteins. Positive regulator of root meristem development that, together with UBP12, prevents the ubiquitination and turnover of RGFR1 induced by the RGF1 hormone peptide, thus influencing PLT1 and PLT2 expression. The chain is Ubiquitin C-terminal hydrolase 13 from Arabidopsis thaliana (Mouse-ear cress).